An 806-amino-acid polypeptide reads, in one-letter code: Integrin beta-7 (806 aa).

An N-terminal signal peptide occupies residues 1–19; the sequence is MVDSSTVLIFLLVLGGGQS. At 20–724 the chain is on the extracellular side; that stretch reads ELDTKITSSG…PQEKGVDHTR (705 aa). One can recognise a PSI domain in the interval 44–92; it reads SCQPVPSCQKCILSHPSCAWCKQLNFTASGEAEARRCARREELLARGCP. 26 disulfides stabilise this stretch: Cys-51–Cys-476, Cys-54–Cys-80, Cys-64–Cys-91, Cys-216–Cys-223, Cys-271–Cys-311, Cys-412–Cys-428, Cys-448–Cys-474, Cys-478–Cys-497, Cys-488–Cys-500, Cys-502–Cys-511, Cys-513–Cys-545, Cys-527–Cys-543, Cys-537–Cys-548, Cys-550–Cys-559, Cys-561–Cys-582, Cys-566–Cys-580, Cys-574–Cys-585, Cys-587–Cys-596, Cys-598–Cys-621, Cys-605–Cys-619, Cys-613–Cys-624, Cys-626–Cys-635, Cys-638–Cys-641, Cys-645–Cys-688, Cys-651–Cys-670, and Cys-654–Cys-666. An N-linked (GlcNAc...) asparagine glycan is attached at Asn-68. The span at 98-107 shows a compositional bias: basic and acidic residues; the sequence is EPRGRQEVLQ. A disordered region spans residues 98–123; sequence EPRGRQEVLQDKPLSQGDRGEGATQL. Positions 150-389 constitute a VWFA domain; the sequence is YPVDLYYLMD…QLIMDAYDSL (240 aa). Mg(2+) is bound by residues Ser-161 and Ser-163. Positions 163, 166, 167, and 198 each coordinate Ca(2+). A glycan (N-linked (GlcNAc...) asparagine) is linked at Asn-250. Residues Asn-254, Asp-256, Pro-258, and Glu-259 each coordinate Ca(2+). Glu-259 is a Mg(2+) binding site. N-linked (GlcNAc...) asparagine glycosylation is present at Asn-279. The Ca(2+) site is built by Asp-289 and Glu-373. A glycan (N-linked (GlcNAc...) asparagine) is linked at Asn-434. 4 consecutive I-EGF domains span residues 478 to 512, 513 to 560, 561 to 597, and 598 to 636; these read CGDA…QLCE, CSEA…RLCE, CDDA…RACE, and CSKS…ALCD. Asn-531 carries an N-linked (GlcNAc...) asparagine glycan. N-linked (GlcNAc...) asparagine glycosylation is present at Asn-590. N-linked (GlcNAc...) asparagine glycosylation is found at Asn-665 and Asn-674. The helical transmembrane segment at 725-745 threads the bilayer; it reads AIILGCTGGIVAVGLGLVLAY. Residues 746 to 806 are Cytoplasmic-facing; that stretch reads RLSVEIYDRR…PSLSLTREAD (61 aa). Positions 786–806 are disordered; it reads NPRFQGTNGRSPSLSLTREAD.

Belongs to the integrin beta chain family. As to quaternary structure, heterodimer of an alpha and a beta subunit. ITGB7/beta-7 associates with either ITGA4/alpha-4 or ITGAE/alpha-E. Integrin ITGA4/ITGB7 interacts with MADCAM1. Integrin ITGA4/ITGB7 interacts with VCAM1 and fibronectin. Interacts with FLNA (via filamin repeats 4, 9, 12, 17, 19, 21, and 23).

The protein localises to the cell membrane. Functionally, integrin ITGA4/ITGB7 (alpha-4/beta-7) (Peyer patches-specific homing receptor LPAM-1) is an adhesion molecule that mediates lymphocyte migration and homing to gut-associated lymphoid tissue (GALT). Integrin ITGA4/ITGB7 interacts with the cell surface adhesion molecules MADCAM1 which is normally expressed by the vascular endothelium of the gastrointestinal tract. Also interacts with VCAM1 and fibronectin, an extracellular matrix component. It recognizes one or more domains within the alternatively spliced CS-1 region of fibronectin. Interactions involve the tripeptide L-D-T in MADCAM1, and L-D-V in fibronectin. Integrin ITGAE/ITGB7 (alpha-E/beta-7, HML-1) is a receptor for E-cadherin. The sequence is that of Integrin beta-7 (Itgb7) from Mus musculus (Mouse).